Here is a 335-residue protein sequence, read N- to C-terminus: Pro-cathepsin H (335 aa).

A signal peptide spans 1–22 (MWAVLPLLCAGAWLLGAPACGA). The propeptide at 23-97 (AELAANSLEK…DELKRKYLWS (75 aa)) is activation peptide. Residues Asn72 and Asn101 are each glycosylated (N-linked (GlcNAc...) asparagine). Disulfide bonds link Cys102/Cys327, Cys138/Cys181, Cys172/Cys214, and Cys272/Cys322. A propeptide spanning residues 106–115 (KSNYLRGTGP) is cleaved from the precursor. The active site involves Cys141. A glycan (N-linked (GlcNAc...) asparagine) is linked at Asn230. Active-site residues include His281 and Asn301.

This sequence belongs to the peptidase C1 family. In terms of assembly, composed of a mini chain and a large chain. The large chain may be split into heavy and light chain. All chains are held together by disulfide bonds.

It localises to the lysosome. It carries out the reaction Hydrolysis of proteins, acting as an aminopeptidase (notably, cleaving Arg-|-Xaa bonds) as well as an endopeptidase.. Important for the overall degradation of proteins in lysosomes. The chain is Pro-cathepsin H (CTSH) from Bos taurus (Bovine).